A 463-amino-acid polypeptide reads, in one-letter code: UDP-N-acetylmuramoylalanine--D-glutamate ligase (463 aa).

126–132 (GSNGKST) contacts ATP.

This sequence belongs to the MurCDEF family.

The protein localises to the cytoplasm. The catalysed reaction is UDP-N-acetyl-alpha-D-muramoyl-L-alanine + D-glutamate + ATP = UDP-N-acetyl-alpha-D-muramoyl-L-alanyl-D-glutamate + ADP + phosphate + H(+). It participates in cell wall biogenesis; peptidoglycan biosynthesis. Cell wall formation. Catalyzes the addition of glutamate to the nucleotide precursor UDP-N-acetylmuramoyl-L-alanine (UMA). The polypeptide is UDP-N-acetylmuramoylalanine--D-glutamate ligase (Idiomarina loihiensis (strain ATCC BAA-735 / DSM 15497 / L2-TR)).